A 122-amino-acid polypeptide reads, in one-letter code: Large ribosomal subunit protein uL14 (122 aa).

It belongs to the universal ribosomal protein uL14 family. Part of the 50S ribosomal subunit. Forms a cluster with proteins L3 and L19. In the 70S ribosome, L14 and L19 interact and together make contacts with the 16S rRNA in bridges B5 and B8.

Functionally, binds to 23S rRNA. Forms part of two intersubunit bridges in the 70S ribosome. This is Large ribosomal subunit protein uL14 from Variovorax paradoxus (strain S110).